Here is a 40-residue protein sequence, read N- to C-terminus: Entry-fusion complex protein OPG076 (40 aa).

A helical transmembrane segment spans residues Leu-2–Leu-22. Over Arg-23–Thr-40 the chain is Virion surface.

Belongs to the orthopoxvirus OPG076 family. In terms of assembly, component of the entry fusion complex (EFC) composed of OPG053, OPG076, OPG086, OPG094, OPG095, OPG099, OPG107, OPG143, OPG104, OPG147 and OPG155. Except for OPG095 and OPG053, each of the EFC proteins is required for assembly or stability of the complex. Unglycosylated because produced in viral factories instead of the classic ER -Golgi route.

The protein resides in the virion membrane. Its function is as follows. Component of the entry fusion complex (EFC), which consists of 11 proteins. During cell infection, this complex mediates entry of the virion core into the host cytoplasm by a two-step mechanism consisting of lipid mixing of the viral and cellular membranes and subsequent pore formation. The chain is Entry-fusion complex protein OPG076 (OPG076) from Variola virus (isolate Human/India/Ind3/1967) (VARV).